The chain runs to 44 residues: Photosystem I reaction center subunit IX (44 aa).

A helical membrane pass occupies residues 7–27 (YLSTAPVLAILCVSFLAALLI).

It belongs to the PsaJ family.

The protein resides in the plastid. It localises to the chloroplast thylakoid membrane. In terms of biological role, may help in the organization of the PsaE and PsaF subunits. The sequence is that of Photosystem I reaction center subunit IX from Pinus thunbergii (Japanese black pine).